We begin with the raw amino-acid sequence, 129 residues long: Small ribosomal subunit protein uS11 (129 aa).

Belongs to the universal ribosomal protein uS11 family. As to quaternary structure, part of the 30S ribosomal subunit.

In terms of biological role, located on the platform of the 30S subunit. The sequence is that of Small ribosomal subunit protein uS11 from Methanocaldococcus jannaschii (strain ATCC 43067 / DSM 2661 / JAL-1 / JCM 10045 / NBRC 100440) (Methanococcus jannaschii).